The following is a 96-amino-acid chain: Co-chaperonin GroES (96 aa).

Residues 26-48 (LLPGSAQEKPSQGEVLATGNGQI) are disordered.

The protein belongs to the GroES chaperonin family. In terms of assembly, heptamer of 7 subunits arranged in a ring. Interacts with the chaperonin GroEL.

The protein localises to the cytoplasm. Functionally, together with the chaperonin GroEL, plays an essential role in assisting protein folding. The GroEL-GroES system forms a nano-cage that allows encapsulation of the non-native substrate proteins and provides a physical environment optimized to promote and accelerate protein folding. GroES binds to the apical surface of the GroEL ring, thereby capping the opening of the GroEL channel. The sequence is that of Co-chaperonin GroES from Psychrobacter arcticus (strain DSM 17307 / VKM B-2377 / 273-4).